The sequence spans 250 residues: Acyl-coenzyme A diphosphatase fit1 (250 aa).

The Cytoplasmic portion of the chain corresponds to 1 to 23 (MTEKTASHYWNEETSILKLRRKD). A helical membrane pass occupies residues 24-44 (ILLFEIYATTLLLGSIYSIYV). At 45 to 58 (DKWSITSYFGNSKN) the chain is on the lumenal side. Residues 59 to 79 (LINLIFVKRGWFWTSLVYFYH) form a helical membrane-spanning segment. Over 80-95 (AWDQKRNKIDFKFISR) the chain is Cytoplasmic. A helical transmembrane segment spans residues 96–116 (YIVATLWWMFVTQWFIGPGLI). Residues 117–160 (DRTFALSGGSCKNFDGDSSVFIPLTASTCKGLNGSWSGGHDLSG) lie on the Lumenal side of the membrane. N-linked (GlcNAc...) asparagine glycosylation occurs at asparagine 149. Histidine 161 is an active-site residue. Residues 161–181 (HVFLLTHSSLFMLSENFSFIL) form a helical membrane-spanning segment. Topologically, residues 182 to 191 (NNGIKATSTK) are cytoplasmic. The helical transmembrane segment at 192-212 (VLFGLLGLWWWMLFVTASFYH) threads the bilayer. Histidine 212 is a catalytic residue. Threonine 213 is a topological domain (lumenal). The helical transmembrane segment at 214–234 (TFEKCTGFFSGILEWSIVYVF) threads the bilayer. At 235-250 (SSRMPAVADLLGSSDY) the chain is on the cytoplasmic side.

The protein belongs to the FIT family. Fungal FIT2B/SCS3 subfamily.

It is found in the endoplasmic reticulum membrane. The enzyme catalyses an acyl-CoA + H2O = an acyl-4'-phosphopantetheine + adenosine 3',5'-bisphosphate + 2 H(+). It catalyses the reaction (9Z)-octadecenoyl-CoA + H2O = S-(9Z-octadecenoyl)-4'-phosphopantetheine + adenosine 3',5'-bisphosphate + 2 H(+). It carries out the reaction (5Z,8Z,11Z,14Z)-eicosatetraenoyl-CoA + H2O = S-(5Z,8Z,11Z,14Z-eicosatetraenoyl)-4'-phosphopantetheine + adenosine 3',5'-bisphosphate + 2 H(+). The catalysed reaction is hexadecanoyl-CoA + H2O = S-hexadecanoyl-4'-phosphopantetheine + adenosine 3',5'-bisphosphate + 2 H(+). In terms of biological role, fatty acyl-coenzyme A (CoA) diphosphatase that hydrolyzes fatty acyl-CoA to yield acyl-4'-phosphopantetheine and adenosine 3',5'-bisphosphate. Preferentially hydrolyzes unsaturated long-chain acyl-CoA substrates in the endoplasmic reticulum (ER) lumen. This catalytic activity is required for maintaining ER structure and for lipid droplets (LDs) biogenesis, which are lipid storage organelles involved in maintaining lipid and energy homeostasis. May directly bind to diacylglycerol (DAGs) and triacylglycerol, which is also important for LD biogenesis. May support directional budding of nacent LDs from the ER into the cytosol by reducing DAG levels at sites of LD formation. May play a role in the regulation of cell morphology and cytoskeletal organization. The chain is Acyl-coenzyme A diphosphatase fit1 from Schizosaccharomyces pombe (strain 972 / ATCC 24843) (Fission yeast).